We begin with the raw amino-acid sequence, 421 residues long: Tubulin gamma-3 chain (421 aa).

94-100 (AGGTGSG) contributes to the GTP binding site.

It belongs to the tubulin family.

The protein localises to the cytoplasm. It localises to the cytoskeleton. The protein resides in the microtubule organizing center. Functionally, tubulin is the major constituent of microtubules. The gamma chain is found at microtubule organizing centers (MTOC) such as the spindle poles, suggesting that it is involved in the minus-end nucleation of microtubule assembly. The polypeptide is Tubulin gamma-3 chain (TUBG3) (Zea mays (Maize)).